The primary structure comprises 322 residues: DNA repair and recombination protein RadA (322 aa).

Position 105-112 (105-112) interacts with ATP; the sequence is GMFGSGKT.

Belongs to the eukaryotic RecA-like protein family.

Its function is as follows. Involved in DNA repair and in homologous recombination. Binds and assemble on single-stranded DNA to form a nucleoprotein filament. Hydrolyzes ATP in a ssDNA-dependent manner and promotes DNA strand exchange between homologous DNA molecules. The protein is DNA repair and recombination protein RadA of Methanococcus maripaludis (strain DSM 14266 / JCM 13030 / NBRC 101832 / S2 / LL).